We begin with the raw amino-acid sequence, 274 residues long: Large ribosomal subunit protein uL2 (274 aa).

Disordered regions lie at residues 35–55 and 224–274; these read FGKK…RHRG and AMNP…KLKG. The span at 45-55 shows a compositional bias: basic residues; it reads NHGRITTRHRG. A compositionally biased stretch (basic and acidic residues) spans 263 to 274; that stretch reads KSSDKYIKKLKG.

The protein belongs to the universal ribosomal protein uL2 family. In terms of assembly, part of the 50S ribosomal subunit. Forms a bridge to the 30S subunit in the 70S ribosome.

One of the primary rRNA binding proteins. Required for association of the 30S and 50S subunits to form the 70S ribosome, for tRNA binding and peptide bond formation. It has been suggested to have peptidyltransferase activity; this is somewhat controversial. Makes several contacts with the 16S rRNA in the 70S ribosome. The polypeptide is Large ribosomal subunit protein uL2 (Wolbachia pipientis subsp. Culex pipiens (strain wPip)).